We begin with the raw amino-acid sequence, 425 residues long: G protein-activated inward rectifier potassium channel 2 (425 aa).

At 1–91 the chain is on the cytoplasmic side; the sequence is MTMAKLTESM…IFTTLVDLKW (91 aa). Phosphoserine is present on residues Ser18 and Ser25. Residues 92–116 traverse the membrane as a helical segment; it reads RFNLLIFVMVYTVTWLFFGMIWWLI. The Extracellular segment spans residues 117 to 140; sequence AYIRGDMDHIEDPSWTPCVTNLNG. An intramembrane region (helical; Pore-forming) is located at residues 141–152; that stretch reads FVSAFLFSIETE. Residues 153 to 159 constitute an intramembrane region (pore-forming); it reads TTIGYGY. Residues 154-159 carry the Selectivity filter motif; that stretch reads TIGYGY. At 160 to 168 the chain is on the extracellular side; that stretch reads RVITDKCPE. The helical transmembrane segment at 169–190 threads the bilayer; it reads GIILLLIQSVLGSIVNAFMVGC. At 191 to 425 the chain is on the cytoplasmic side; that stretch reads MFVKISQPKK…VANLENESKV (235 aa). The tract at residues 392–425 is disordered; that stretch reads NQHAELETEEEEKNPEELTERNGDVANLENESKV. The PDZ-binding motif lies at 422 to 425; sequence ESKV.

Belongs to the inward rectifier-type potassium channel (TC 1.A.2.1) family. KCNJ6 subfamily. Associates with KCNJ3/GIRK1to form a G-protein-activated heteromultimer pore-forming unit. Associates with KCNJ5/GRIK4 to form a G-protein-activated heteromultimer pore-forming unit. The resulting inward current is much larger. Interacts (via PDZ-binding motif) with SNX27 (via PDZ domain); the interaction is required when endocytosed to prevent degradation in lysosomes and promote recycling to the plasma membrane. In terms of assembly, associates with KCNJ3/GRIK1 to form a G-protein-activated heteromultimer pore-forming unit. As to quaternary structure, associates with KCNJ3/GRIK1 to form a G-protein-activated heteromultimer pore-forming unit. The resulting inward current is much larger. Expressed in the brain.

The protein resides in the membrane. The enzyme catalyses K(+)(in) = K(+)(out). With respect to regulation, activated by phosphatidylinositol 4,5 biphosphate (PtdIns(4,5)P2). Its function is as follows. Inward rectifier potassium channels are characterized by a greater tendency to allow potassium to flow into the cell rather than out of it. Their voltage dependence is regulated by the concentration of extracellular potassium; as external potassium is raised, the voltage range of the channel opening shifts to more positive voltages. The inward rectification is mainly due to the blockage of outward current by internal magnesium. This potassium channel is controlled by G proteins. Forms a functional channel in association with KCNJ3/GIRK1. Functionally, inward rectifier potassium channels are characterized by a greater tendency to allow potassium to flow into the cell rather than out of it. Their voltage dependence is regulated by the concentration of extracellular potassium; as external potassium is raised, the voltage range of the channel opening shifts to more positive voltages. The inward rectification is mainly due to the blockage of outward current by internal magnesium. This potassium channel is controlled by G proteins. This is G protein-activated inward rectifier potassium channel 2 (Kcnj6) from Mus musculus (Mouse).